The sequence spans 173 residues: Co-chaperone protein HscB homolog (173 aa).

Positions 5-77 constitute a J domain; it reads CHFALFDLQP…SQRARYLLAL (73 aa).

Belongs to the HscB family. Interacts with HscA and stimulates its ATPase activity.

Co-chaperone involved in the maturation of iron-sulfur cluster-containing proteins. Seems to help targeting proteins to be folded toward HscA. This chain is Co-chaperone protein HscB homolog, found in Ectopseudomonas mendocina (strain ymp) (Pseudomonas mendocina).